The sequence spans 395 residues: MKKDYYEVLGLSRSATKDEIKKAYRKLAMQYHPDKNPDNKDAEEHFKEVNEAYEALSNDDKRRRYDQFGHAGVGSSAASGGGQYGAGASDFSDIFSAFNDMFGGGKQRGGFEDVFGGAAGAGGRRGRASGGIHGTDLKIRLKLTLEEIAHGVEKTLKIKKQIACTECNGTGSKSGATETCPTCHGSGEVRQAAKTMFGQFVNITACPTCGGEGRVVKDRCVSCYGEGIKQGEVTVKVTVPAGVQDSNYLTLRGQGNAGPRGGANGDLIVVIEEKPHEKFQRNGDDVIYHLALGFPDLVLGTKVDVPTLDGSVKLTIPPSTQPETMLRIPGHGIGHLRGSGRGDQYVRVNVFVPKEVSSHDRELLKELKNSSAISPADQNDREEKSFFEKARDIFS.

Residues 4 to 69 form the J domain; the sequence is DYYEVLGLSR…DKRRRYDQFG (66 aa). A CR-type zinc finger spans residues 151–232; sequence GVEKTLKIKK…CYGEGIKQGE (82 aa). Residues C164, C167, C180, C183, C206, C209, C220, and C223 each contribute to the Zn(2+) site. 4 CXXCXGXG motif repeats span residues 164 to 171, 180 to 187, 206 to 213, and 220 to 227; these read CTECNGTG, CPTCHGSG, CPTCGGEG, and CVSCYGEG.

This sequence belongs to the DnaJ family. As to quaternary structure, homodimer. The cofactor is Zn(2+).

It localises to the cytoplasm. In terms of biological role, participates actively in the response to hyperosmotic and heat shock by preventing the aggregation of stress-denatured proteins and by disaggregating proteins, also in an autonomous, DnaK-independent fashion. Unfolded proteins bind initially to DnaJ; upon interaction with the DnaJ-bound protein, DnaK hydrolyzes its bound ATP, resulting in the formation of a stable complex. GrpE releases ADP from DnaK; ATP binding to DnaK triggers the release of the substrate protein, thus completing the reaction cycle. Several rounds of ATP-dependent interactions between DnaJ, DnaK and GrpE are required for fully efficient folding. Also involved, together with DnaK and GrpE, in the DNA replication of plasmids through activation of initiation proteins. This chain is Chaperone protein DnaJ, found in Chlorobium phaeobacteroides (strain DSM 266 / SMG 266 / 2430).